A 140-amino-acid chain; its full sequence is Organic hydroperoxide resistance protein-like (140 aa).

This sequence belongs to the OsmC/Ohr family.

In Staphylococcus aureus (strain USA300), this protein is Organic hydroperoxide resistance protein-like.